A 269-amino-acid polypeptide reads, in one-letter code: MAIPVVVVGCAGKMGREVVKAVHAAPDMAVVGAVDRSHIDEDAGELAGIGPIDVLVTDNLEITCAMVAQERAPGVMVDFTHPRGIYDRVRSAIAYGVRPVVGTTGLPPEHIEELAEFADKASTGCIVAPNFAIGMILLQQACLRAAEYFDHVEIIELHHNRKADAPSGTALATAQMIATTGKTFNVPEVSESELVAGARGGMTPGDIRIHSLRLPGLLAHQAVIFGGLGQSYTLRHDTTDRAAYMPGVLLAIRKVLGLKSLVYGLEKII.

Residues 9 to 14 (GCAGKM), Asp-35, 102 to 104 (GTT), and 128 to 131 (APNF) contribute to the NAD(+) site. Residue His-158 is the Proton donor/acceptor of the active site. His-159 is a binding site for (S)-2,3,4,5-tetrahydrodipicolinate. The active-site Proton donor is Lys-162. 168–169 (GT) lines the (S)-2,3,4,5-tetrahydrodipicolinate pocket.

It belongs to the DapB family.

The protein localises to the cytoplasm. The enzyme catalyses (S)-2,3,4,5-tetrahydrodipicolinate + NAD(+) + H2O = (2S,4S)-4-hydroxy-2,3,4,5-tetrahydrodipicolinate + NADH + H(+). The catalysed reaction is (S)-2,3,4,5-tetrahydrodipicolinate + NADP(+) + H2O = (2S,4S)-4-hydroxy-2,3,4,5-tetrahydrodipicolinate + NADPH + H(+). The protein operates within amino-acid biosynthesis; L-lysine biosynthesis via DAP pathway; (S)-tetrahydrodipicolinate from L-aspartate: step 4/4. Its function is as follows. Catalyzes the conversion of 4-hydroxy-tetrahydrodipicolinate (HTPA) to tetrahydrodipicolinate. This is 4-hydroxy-tetrahydrodipicolinate reductase from Gloeobacter violaceus (strain ATCC 29082 / PCC 7421).